We begin with the raw amino-acid sequence, 101 residues long: Urease subunit beta (101 aa).

It belongs to the urease beta subunit family. Heterotrimer of UreA (gamma), UreB (beta) and UreC (alpha) subunits. Three heterotrimers associate to form the active enzyme.

The protein localises to the cytoplasm. The catalysed reaction is urea + 2 H2O + H(+) = hydrogencarbonate + 2 NH4(+). It participates in nitrogen metabolism; urea degradation; CO(2) and NH(3) from urea (urease route): step 1/1. The polypeptide is Urease subunit beta (Burkholderia multivorans (strain ATCC 17616 / 249)).